The following is a 555-amino-acid chain: MATTEANTMAQANSQTTIEPVRHLANFPPSIWGDQFLSFSLDNSQLEAYSKAMEQPKENVRRMILNPAIDTNEKLGLIYCVYRLGLTYNFSKDIDGQLDELFKQLNLQSYNEADLYTISIHFQVFRHFGYRFSCDVFNKFKDSSSGKFKEDMTRDVRGMISLYESAQLRIRGESILDEAGAFAESKLKTIEKTLDGTLAQQVKHVLERPFNRGHQMVEARKYLFLFEEEISRYDSLLMLAKVHFNYLQLLQKEELRSVSKWWKDLDLPAKTLYVRDRVPELYVWILAFFLEPYYSEVRIITTKIVLLVLVLDDTYDAYATIEESRLLTHAINRWEVSAMLQLPEYMKPLYEILLNEYDGFYKHGRTNVIETSKKAFQDLARSYHQESEWRHAKEVPSFEEYMKIGTTTSAHNVLSKTALIGMGNIVTREALAWYESYPKIVQLSELIGRLEDDVVSVEFERERAPTATSVDAYMKTYGVSENVAVKILKKLVENGWKDLNEACLKPTEVSLDLLAPIIGLTNMTDVAYRHNDGLTFPEKTLKEYITLLFCVPVPM.

5 residues coordinate Mg(2+): D312, D316, D452, S456, and E460. Residues 312-316 (DDTYD) carry the DDXXD motif motif.

It belongs to the terpene synthase family. It depends on Mg(2+) as a cofactor. In terms of tissue distribution, mainly expressed in sunflower trichomes.

It catalyses the reaction (2E,6E)-farnesyl diphosphate = alpha-copaene + diphosphate. The enzyme catalyses (2E,6E)-farnesyl diphosphate = alpha-muurolene + diphosphate. The catalysed reaction is (2E,6E)-farnesyl diphosphate = alpha-humulene + diphosphate. Its pathway is secondary metabolite biosynthesis; terpenoid biosynthesis. Involved in the biosynthesis of germacrene-derived sesquiterpene lactones. Catalyzes the cyclization of farnesyl diphosphate to alpha-copaene, delta-cadinene, alpha-muurolene, beta-caryophyllene and alpha-humulene. In Helianthus annuus (Common sunflower), this protein is Alpha-copaene synthase (CS).